A 570-amino-acid polypeptide reads, in one-letter code: Glucan 1,3-beta-glucosidase 2 (570 aa).

Asn-91, Asn-116, Asn-121, Asn-184, Asn-203, and Asn-248 each carry an N-linked (GlcNAc...) asparagine glycan. Glu-338 serves as the catalytic Proton donor. Asn-364 is a glycosylation site (N-linked (GlcNAc...) asparagine). The active-site Nucleophile is the Glu-439. Asn-525 and Asn-552 each carry an N-linked (GlcNAc...) asparagine glycan.

This sequence belongs to the glycosyl hydrolase 5 (cellulase A) family.

Its subcellular location is the secreted. It carries out the reaction Successive hydrolysis of beta-D-glucose units from the non-reducing ends of (1-&gt;3)-beta-D-glucans, releasing alpha-glucose.. The polypeptide is Glucan 1,3-beta-glucosidase 2 (exg2) (Schizosaccharomyces pombe (strain 972 / ATCC 24843) (Fission yeast)).